A 427-amino-acid polypeptide reads, in one-letter code: 3-phosphoshikimate 1-carboxyvinyltransferase (427 aa).

Lys-20, Ser-21, and Arg-25 together coordinate 3-phosphoshikimate. Lys-20 contacts phosphoenolpyruvate. 2 residues coordinate phosphoenolpyruvate: Gly-92 and Arg-120. Positions 166, 168, 312, and 339 each coordinate 3-phosphoshikimate. Gln-168 serves as a coordination point for phosphoenolpyruvate. The Proton acceptor role is filled by Asp-312. Residues Arg-343 and Arg-385 each coordinate phosphoenolpyruvate.

This sequence belongs to the EPSP synthase family. Monomer.

It is found in the cytoplasm. The enzyme catalyses 3-phosphoshikimate + phosphoenolpyruvate = 5-O-(1-carboxyvinyl)-3-phosphoshikimate + phosphate. The protein operates within metabolic intermediate biosynthesis; chorismate biosynthesis; chorismate from D-erythrose 4-phosphate and phosphoenolpyruvate: step 6/7. Functionally, catalyzes the transfer of the enolpyruvyl moiety of phosphoenolpyruvate (PEP) to the 5-hydroxyl of shikimate-3-phosphate (S3P) to produce enolpyruvyl shikimate-3-phosphate and inorganic phosphate. The sequence is that of 3-phosphoshikimate 1-carboxyvinyltransferase from Streptococcus pneumoniae serotype 2 (strain D39 / NCTC 7466).